The sequence spans 672 residues: tRNA 5-methylaminomethyl-2-thiouridine biosynthesis bifunctional protein MnmC (672 aa).

The tract at residues M1–P241 is tRNA (mnm(5)s(2)U34)-methyltransferase. The interval I271–K672 is FAD-dependent cmnm(5)s(2)U34 oxidoreductase.

In the N-terminal section; belongs to the methyltransferase superfamily. tRNA (mnm(5)s(2)U34)-methyltransferase family. This sequence in the C-terminal section; belongs to the DAO family. It depends on FAD as a cofactor.

It localises to the cytoplasm. It carries out the reaction 5-aminomethyl-2-thiouridine(34) in tRNA + S-adenosyl-L-methionine = 5-methylaminomethyl-2-thiouridine(34) in tRNA + S-adenosyl-L-homocysteine + H(+). In terms of biological role, catalyzes the last two steps in the biosynthesis of 5-methylaminomethyl-2-thiouridine (mnm(5)s(2)U) at the wobble position (U34) in tRNA. Catalyzes the FAD-dependent demodification of cmnm(5)s(2)U34 to nm(5)s(2)U34, followed by the transfer of a methyl group from S-adenosyl-L-methionine to nm(5)s(2)U34, to form mnm(5)s(2)U34. In Mannheimia succiniciproducens (strain KCTC 0769BP / MBEL55E), this protein is tRNA 5-methylaminomethyl-2-thiouridine biosynthesis bifunctional protein MnmC.